The sequence spans 820 residues: Serine/threonine-protein phosphatase 4 regulatory subunit 3-B (820 aa).

The region spanning methionine 1–valine 100 is the WH1 domain. Acidic residues predominate over residues glutamate 682 to glutamate 694. 2 disordered regions span residues glutamate 682–glutamate 711 and alanine 750–serine 820. Residues glutamate 701–glutamate 711 are compositionally biased toward basic and acidic residues. Composition is skewed to polar residues over residues alanine 750 to serine 761 and proline 768 to glycine 790. Positions tyrosine 798 to aspartate 809 are enriched in acidic residues.

Belongs to the SMEK family. In terms of assembly, serine/threonine-protein phosphatase 4 (PP4) occurs in different assemblies of the catalytic and one or more regulatory subunits.

Functionally, regulatory subunit of serine/threonine-protein phosphatase 4 (PP4). The sequence is that of Serine/threonine-protein phosphatase 4 regulatory subunit 3-B from Xenopus laevis (African clawed frog).